Here is an 885-residue protein sequence, read N- to C-terminus: Protein arg11, mitochondrial (885 aa).

Residues M1 to E59 constitute a mitochondrion transit peptide. One can recognise an N-acetyltransferase domain in the interval F346–I499. Residues S503–Q523 are compositionally biased toward low complexity. A disordered region spans residues S503–L532. C703 is an active-site residue.

It in the N-terminal section; belongs to the acetylglutamate kinase family. The protein in the C-terminal section; belongs to the NAGSA dehydrogenase family. In terms of processing, the protein precursor is probably cleaved into the two biologically active enzymes, the kinase and the reductase.

The protein resides in the mitochondrion. It carries out the reaction N-acetyl-L-glutamate 5-semialdehyde + phosphate + NADP(+) = N-acetyl-L-glutamyl 5-phosphate + NADPH + H(+). The enzyme catalyses N-acetyl-L-glutamate + ATP = N-acetyl-L-glutamyl 5-phosphate + ADP. It participates in amino-acid biosynthesis; L-arginine biosynthesis; N(2)-acetyl-L-ornithine from L-glutamate: step 2/4. The protein operates within amino-acid biosynthesis; L-arginine biosynthesis; N(2)-acetyl-L-ornithine from L-glutamate: step 3/4. The kinase activity is inhibited by arginine. This Schizosaccharomyces pombe (strain 972 / ATCC 24843) (Fission yeast) protein is Protein arg11, mitochondrial (arg11).